The sequence spans 231 residues: Flagellar L-ring protein (231 aa).

Positions 1–18 are cleaved as a signal peptide; that stretch reads MNRLMIVSLLGIATALGG. Residue Cys-19 is the site of N-palmitoyl cysteine attachment. Cys-19 carries S-diacylglycerol cysteine lipidation. The segment at 118-141 is disordered; sequence LSLSAEYGGSRDAKGDSQAGQSNS.

The protein belongs to the FlgH family. The basal body constitutes a major portion of the flagellar organelle and consists of four rings (L,P,S, and M) mounted on a central rod.

Its subcellular location is the cell outer membrane. The protein localises to the bacterial flagellum basal body. Assembles around the rod to form the L-ring and probably protects the motor/basal body from shearing forces during rotation. In Pseudomonas aeruginosa (strain LESB58), this protein is Flagellar L-ring protein.